We begin with the raw amino-acid sequence, 56 residues long: UPF0434 protein Ecaj_0131 (56 aa).

It belongs to the UPF0434 family.

This is UPF0434 protein Ecaj_0131 from Ehrlichia canis (strain Jake).